A 739-amino-acid chain; its full sequence is Glycine--tRNA ligase (739 aa).

The transit peptide at 1–36 directs the protein to the mitochondrion; it reads MPSPRPVLLRGARAALLLLLPPRLLARPSLLLRRSL. Ser35 is subject to Phosphoserine. One can recognise a WHEP-TRS domain in the interval 63 to 119; that stretch reads VLAPLRLAVRQQGDLVRKLKEDKAPQVDVDKAVAELKARKRVLEAKELALQPKDDIV. Lys204 carries the N6-acetyllysine modification. Glu299 contributes to the glycine binding site. ATP-binding positions include 331 to 333 and 342 to 343; these read RNE and RV. Glu350 lines the glycine pocket. Residue Tyr453 is modified to Phosphotyrosine. Residue 457 to 458 participates in ATP binding; the sequence is EI. Lys501 carries the N6-acetyllysine modification. 576-578 serves as a coordination point for glycine; sequence EPS. Arg583 is a binding site for ATP. The residue at position 700 (Ser700) is a Phosphoserine. Thr736 carries the phosphothreonine modification.

The protein belongs to the class-II aminoacyl-tRNA synthetase family. As to quaternary structure, homodimer. In terms of tissue distribution, widely expressed, including in brain and spinal cord. Expressed in brain, spinal cord, muscle, heart and spleen. As to expression, expressed in brain, spinal cord, muscle, heart, spleen and liver.

Its subcellular location is the cytoplasm. The protein localises to the cell projection. It is found in the axon. It localises to the secreted. The protein resides in the extracellular exosome. Its subcellular location is the mitochondrion. It catalyses the reaction tRNA(Gly) + glycine + ATP = glycyl-tRNA(Gly) + AMP + diphosphate. The enzyme catalyses 2 ATP + H(+) = P(1),P(4)-bis(5'-adenosyl) tetraphosphate + diphosphate. With respect to regulation, ap4A synthesis is inhibited by tRNA, via the disruption of the second ATP-binding site by direct blocking and/or by tRNA-induced conformational change. In terms of biological role, catalyzes the ATP-dependent ligation of glycine to the 3'-end of its cognate tRNA, via the formation of an aminoacyl-adenylate intermediate (Gly-AMP). Also produces diadenosine tetraphosphate (Ap4A), a universal pleiotropic signaling molecule needed for cell regulation pathways, by direct condensation of 2 ATPs. Thereby, may play a special role in Ap4A homeostasis. In Homo sapiens (Human), this protein is Glycine--tRNA ligase.